The following is a 128-amino-acid chain: Sirohydrochlorin cobaltochelatase (128 aa).

H9 functions as the Proton acceptor in the catalytic mechanism. Position 9 (H9) interacts with Co(2+). Residues K43 and 68 to 73 each bind substrate; that span reads FATGTH. H73 contacts Co(2+).

It belongs to the CbiX family. CbiXS subfamily. As to quaternary structure, homotetramer; dimer of dimers.

It carries out the reaction Co-sirohydrochlorin + 2 H(+) = sirohydrochlorin + Co(2+). It participates in cofactor biosynthesis; adenosylcobalamin biosynthesis; cob(II)yrinate a,c-diamide from sirohydrochlorin (anaerobic route): step 1/10. Its function is as follows. Catalyzes the insertion of Co(2+) into sirohydrochlorin as part of the anaerobic pathway to cobalamin biosynthesis. In Saccharolobus islandicus (strain Y.G.57.14 / Yellowstone #1) (Sulfolobus islandicus), this protein is Sirohydrochlorin cobaltochelatase.